The following is a 214-amino-acid chain: Alkaline phosphatase-like protein (214 aa).

Helical transmembrane passes span 48 to 68 (LGII…ALIL), 141 to 161 (FLIL…CLGA), and 177 to 197 (YSSV…LIFV).

Belongs to the DedA family.

Its subcellular location is the cell membrane. The chain is Alkaline phosphatase-like protein (apl) from Lactococcus lactis subsp. lactis (strain IL1403) (Streptococcus lactis).